Reading from the N-terminus, the 111-residue chain is Ribosome-binding factor A (111 aa).

This sequence belongs to the RbfA family. As to quaternary structure, monomer. Binds 30S ribosomal subunits, but not 50S ribosomal subunits or 70S ribosomes.

The protein localises to the cytoplasm. Its function is as follows. One of several proteins that assist in the late maturation steps of the functional core of the 30S ribosomal subunit. Associates with free 30S ribosomal subunits (but not with 30S subunits that are part of 70S ribosomes or polysomes). Required for efficient processing of 16S rRNA. May interact with the 5'-terminal helix region of 16S rRNA. This Helicobacter pylori (strain P12) protein is Ribosome-binding factor A.